A 192-amino-acid polypeptide reads, in one-letter code: Orotate phosphoribosyltransferase (192 aa).

116-124 (EDIVTTGLS) contributes to the 5-phospho-alpha-D-ribose 1-diphosphate binding site. 2 residues coordinate orotate: T120 and R148.

This sequence belongs to the purine/pyrimidine phosphoribosyltransferase family. PyrE subfamily. As to quaternary structure, homodimer. Requires Mg(2+) as cofactor.

It catalyses the reaction orotidine 5'-phosphate + diphosphate = orotate + 5-phospho-alpha-D-ribose 1-diphosphate. Its pathway is pyrimidine metabolism; UMP biosynthesis via de novo pathway; UMP from orotate: step 1/2. Functionally, catalyzes the transfer of a ribosyl phosphate group from 5-phosphoribose 1-diphosphate to orotate, leading to the formation of orotidine monophosphate (OMP). This chain is Orotate phosphoribosyltransferase, found in Bartonella henselae (strain ATCC 49882 / DSM 28221 / CCUG 30454 / Houston 1) (Rochalimaea henselae).